A 294-amino-acid polypeptide reads, in one-letter code: ATP phosphoribosyltransferase (294 aa).

It belongs to the ATP phosphoribosyltransferase family. Long subfamily. It depends on Mg(2+) as a cofactor.

It localises to the cytoplasm. It carries out the reaction 1-(5-phospho-beta-D-ribosyl)-ATP + diphosphate = 5-phospho-alpha-D-ribose 1-diphosphate + ATP. It participates in amino-acid biosynthesis; L-histidine biosynthesis; L-histidine from 5-phospho-alpha-D-ribose 1-diphosphate: step 1/9. Feedback inhibited by histidine. Functionally, catalyzes the condensation of ATP and 5-phosphoribose 1-diphosphate to form N'-(5'-phosphoribosyl)-ATP (PR-ATP). Has a crucial role in the pathway because the rate of histidine biosynthesis seems to be controlled primarily by regulation of HisG enzymatic activity. This chain is ATP phosphoribosyltransferase, found in Pelodictyon phaeoclathratiforme (strain DSM 5477 / BU-1).